A 158-amino-acid chain; its full sequence is Dihydroneopterin triphosphate diphosphatase (158 aa).

Residues K14, R36, and T47 each contribute to the substrate site. The Nudix hydrolase domain maps to 14-153; that stretch reads KNNQSVLVVI…NNAEAIKKYL (140 aa). The Nudix box motif lies at 48 to 69; the sequence is GTIESDETPKKTAIRELWEEVR. Mg(2+) contacts are provided by E63 and E67. 88-91 is a substrate binding site; it reads FEIF. E124 contacts Mg(2+). S142 lines the substrate pocket.

This sequence belongs to the Nudix hydrolase family. It depends on Mg(2+) as a cofactor.

It catalyses the reaction 7,8-dihydroneopterin 3'-triphosphate + H2O = 7,8-dihydroneopterin 3'-phosphate + diphosphate + H(+). Its function is as follows. Catalyzes the hydrolysis of dihydroneopterin triphosphate to dihydroneopterin monophosphate and pyrophosphate. Required for efficient folate biosynthesis. Can also hydrolyze nucleoside triphosphates with a preference for dATP. This is Dihydroneopterin triphosphate diphosphatase (nudB) from Haemophilus influenzae (strain ATCC 51907 / DSM 11121 / KW20 / Rd).